The following is a 263-amino-acid chain: 4-hydroxy-tetrahydrodipicolinate reductase (263 aa).

NAD(+) is bound at residue 10–15 (GASGKM). R38 contributes to the NADP(+) binding site. Residues 97–99 (GTT) and 123–126 (APNF) each bind NAD(+). H153 acts as the Proton donor/acceptor in catalysis. H154 is a binding site for (S)-2,3,4,5-tetrahydrodipicolinate. The active-site Proton donor is K157. 163–164 (GT) serves as a coordination point for (S)-2,3,4,5-tetrahydrodipicolinate.

Belongs to the DapB family.

Its subcellular location is the cytoplasm. The catalysed reaction is (S)-2,3,4,5-tetrahydrodipicolinate + NAD(+) + H2O = (2S,4S)-4-hydroxy-2,3,4,5-tetrahydrodipicolinate + NADH + H(+). It catalyses the reaction (S)-2,3,4,5-tetrahydrodipicolinate + NADP(+) + H2O = (2S,4S)-4-hydroxy-2,3,4,5-tetrahydrodipicolinate + NADPH + H(+). Its pathway is amino-acid biosynthesis; L-lysine biosynthesis via DAP pathway; (S)-tetrahydrodipicolinate from L-aspartate: step 4/4. Functionally, catalyzes the conversion of 4-hydroxy-tetrahydrodipicolinate (HTPA) to tetrahydrodipicolinate. In Dehalococcoides mccartyi (strain CBDB1), this protein is 4-hydroxy-tetrahydrodipicolinate reductase.